Consider the following 187-residue polypeptide: Probable DNA endonuclease SmrA (187 aa).

The Smr domain occupies 88 to 169 (LNLLRQPVEE…GSGACYVALR (82 aa)).

Its function is as follows. Has DNA endonuclease activity. Binds DNA. This Escherichia coli (strain K12) protein is Probable DNA endonuclease SmrA (smrA).